We begin with the raw amino-acid sequence, 197 residues long: MAKQITSNCNFIFGASDIKSLPNESAPEIAFAGRSNVGKSSLINLLINSKKAARVSSKPGCTRQINFYSMYDDKFRLVDLPGYGYSHAGKEEIIQYLNLIEYYLIQRENLRRVFVLIDSKVGLKEIDKDFIYWLIYNNINFNIVLTKIDKVSQKSLGAVIEDIQKWINNENVSIHQMSIRVKHKITKVRDEFFKFTR.

The EngB-type G domain occupies 25–197 (SAPEIAFAGR…VRDEFFKFTR (173 aa)). GTP contacts are provided by residues 33-40 (GRSNVGKS), 60-64 (GCTRQ), 79-82 (DLPG), 146-149 (TKID), and 177-179 (MSI). Positions 40 and 62 each coordinate Mg(2+).

It belongs to the TRAFAC class TrmE-Era-EngA-EngB-Septin-like GTPase superfamily. EngB GTPase family. Requires Mg(2+) as cofactor.

Functionally, necessary for normal cell division and for the maintenance of normal septation. The chain is Probable GTP-binding protein EngB from Wolbachia pipientis wMel.